The primary structure comprises 279 residues: Phosphatidylglycerol--prolipoprotein diacylglyceryl transferase (279 aa).

7 consecutive transmembrane segments (helical) span residues 25–45 (WYGL…KFFV), 60–80 (YFIW…ILIY), 103–123 (FVGI…IATI), 133–153 (LWSL…FGRI), 181–201 (PSQL…LYFY), 209–229 (GELI…TEFL), and 236–256 (IGYF…MLIL). An a 1,2-diacyl-sn-glycero-3-phospho-(1'-sn-glycerol)-binding site is contributed by Arg152.

This sequence belongs to the Lgt family.

It localises to the cell inner membrane. The enzyme catalyses L-cysteinyl-[prolipoprotein] + a 1,2-diacyl-sn-glycero-3-phospho-(1'-sn-glycerol) = an S-1,2-diacyl-sn-glyceryl-L-cysteinyl-[prolipoprotein] + sn-glycerol 1-phosphate + H(+). It functions in the pathway protein modification; lipoprotein biosynthesis (diacylglyceryl transfer). Catalyzes the transfer of the diacylglyceryl group from phosphatidylglycerol to the sulfhydryl group of the N-terminal cysteine of a prolipoprotein, the first step in the formation of mature lipoproteins. This Campylobacter hominis (strain ATCC BAA-381 / DSM 21671 / CCUG 45161 / LMG 19568 / NCTC 13146 / CH001A) protein is Phosphatidylglycerol--prolipoprotein diacylglyceryl transferase.